Reading from the N-terminus, the 516-residue chain is Cytochrome P450 monooxygenase ntnM (516 aa).

The helical transmembrane segment at 22-42 (IINVILSIAAIALIRALAISI) threads the bilayer. Cys453 serves as a coordination point for heme.

Belongs to the cytochrome P450 family. Requires heme as cofactor.

It is found in the membrane. The protein operates within secondary metabolite biosynthesis; terpenoid biosynthesis. Its function is as follows. Cytochrome P450 monooxygenase; part of the gene cluster that mediates the biosynthesis of the meroterpenoids nectripenoids A and B, as well as cochliquninone D and isocochliquninone E. The pathway probably begins with the HR-PKS ntnH that catalyzes two chain-extension steps to form a reduced triketide, which then primes the SAT domain in the NR-PKS ntnG to initiate three more cycles of extension to give a linear hexaketide corresponding to the polyketide part of nectripenoids. The FAD-dependent monooxygenase ntnJ then performs an oxidative decarboxylation at C11 of the ntnH/ntnG product, via an electrophilic aromatic hydroxylation with concomitant ipso-decarboxylation. The membrane-bound polyprenyl transferase ntnF then introduces a farnesyl group before the FAD-dependent monooxygenase ntnK functions as the first epoxidase on terminal C12'-C13' olefin, followed by a second epoxidation on C7'-C8' catalyzed by ntnA. The terpene cyclase/mutase ntnI then initiates the sequential tricyclic ring formation through protonation of the terminal epoxide and catalyzes the regioselective and stereoselective 6/6/6-tricyclic ring formation. The cytochrome P450 monooxygenase ntnM may then hydroxylate C1'. The polypeptide is Cytochrome P450 monooxygenase ntnM (Nectria sp).